A 726-amino-acid polypeptide reads, in one-letter code: Catalase-peroxidase (726 aa).

Positions 1–25 (MDAKTDDSAGKCPFTGGGRRGHRNR) are disordered. The tryptophyl-tyrosyl-methioninium (Trp-Tyr) (with M-244) cross-link spans 96–218 (WHSAGTYRIT…LAAVQMGLIY (123 aa)). Residue His-97 is the Proton acceptor of the active site. Positions 218–244 (YVNPEGPNGNPDPVAAAKDIRETFYRM) form a cross-link, tryptophyl-tyrosyl-methioninium (Tyr-Met) (with W-96). His-259 is a binding site for heme b.

Belongs to the peroxidase family. Peroxidase/catalase subfamily. As to quaternary structure, homodimer or homotetramer. The cofactor is heme b. Post-translationally, formation of the three residue Trp-Tyr-Met cross-link is important for the catalase, but not the peroxidase activity of the enzyme.

The catalysed reaction is H2O2 + AH2 = A + 2 H2O. It carries out the reaction 2 H2O2 = O2 + 2 H2O. In terms of biological role, bifunctional enzyme with both catalase and broad-spectrum peroxidase activity. The polypeptide is Catalase-peroxidase (Chelativorans sp. (strain BNC1)).